We begin with the raw amino-acid sequence, 263 residues long: MSPMNAFDSQTEDSSPAIGRNLRSRPLARKKLSEMVEEELEQMIRRREFGEGEQLPSERELMAFFNVGRPSVREALAALKRKGLVQINNGERARVSRPSADTIIGELSGMAKDFLSHPGGIAHFEQLRLFFESSLVRYAAEHATNEQIDLLAKALEINSQSLDNNAAFIRSDVDFHRVLAEIPGNPIFMAIHVALLDWLIAARPTVADQALHEHNNVSYQQHIAIVDAIRRHDPDEADRALQSHLNSVSATWHAFGQTTNKKK.

A disordered region spans residues 1-24 (MSPMNAFDSQTEDSSPAIGRNLRS). Positions 30–98 (KKLSEMVEEE…NGERARVSRP (69 aa)) constitute an HTH gntR-type domain. The segment at residues 58-77 (ERELMAFFNVGRPSVREALA) is a DNA-binding region (H-T-H motif).

Belongs to the NanR family.

Functionally, transcriptional repressor that controls expression of the genes required for the catabolism of sialic acids. In Escherichia coli O127:H6 (strain E2348/69 / EPEC), this protein is HTH-type transcriptional repressor NanR.